A 616-amino-acid chain; its full sequence is ATP-dependent RNA helicase VAD1 (616 aa).

The disordered stretch occupies residues 1 to 35 (MASSSTLANDDWKQGLAAPPKDLRPQTEDVTATQG). The Q motif motif lies at 36–64 (SRFEDFGLRRELLMGIYTAGFERPSPIQE). Residues 67-238 (IPMALTGRDI…DQHMVQPYEI (172 aa)) enclose the Helicase ATP-binding domain. An ATP-binding site is contributed by 80–87 (AKNGTGKT). The DEAD box motif lies at 186-189 (DEAD). The 161-residue stretch at 248–408 (GVTQYYAYVE…PIPAVIDPVL (161 aa)) folds into the Helicase C-terminal domain. Residues 416 to 616 (EEERESPPPK…GASQSQQAQA (201 aa)) form a disordered region. Composition is skewed to low complexity over residues 427–441 (AAIA…PQQR), 458–500 (PAAA…NSSP), and 508–523 (YPQQ…AQMQ). Over residues 529–545 (PATQPQASAQIPVQGQT) the composition is skewed to polar residues. Low complexity-rich tracts occupy residues 550 to 579 (PRAQ…PNTG) and 606 to 616 (AGASQSQQAQA).

It belongs to the DEAD box helicase family. DDX6/DHH1 subfamily.

The protein resides in the cytoplasm. The protein localises to the P-body. The catalysed reaction is ATP + H2O = ADP + phosphate + H(+). Its function is as follows. ATP-dependent RNA helicase involved in mRNA turnover, and more specifically in mRNA decapping. Is involved in G1/S DNA-damage checkpoint recovery, probably through the regulation of the translational status of a subset of mRNAs. May also have a role in translation and mRNA nuclear export. Blocks autophagy in nutrient-rich conditions by, at least partly, binding and repressing the expression of a set of ATG genes, including ATG3, ATG7, ATG8, ATG19, ATG20 and ATG22. VAD1-mediated repression of autophagy is regulated by TOR-dependent phosphorylation of the decapping enzyme DCP2. Regulates multiple virulence-associated genes. Repression of autophagy by VAD1 also regulates the pathogenesis. The protein is ATP-dependent RNA helicase VAD1 of Cryptococcus neoformans var. grubii serotype A (strain H99 / ATCC 208821 / CBS 10515 / FGSC 9487) (Filobasidiella neoformans var. grubii).